A 392-amino-acid polypeptide reads, in one-letter code: tRNA-specific 2-thiouridylase MnmA (392 aa).

Residues 18–25 and leucine 44 each bind ATP; that span reads AMSGGVDS. Cysteine 112 acts as the Nucleophile in catalysis. Cysteine 112 and cysteine 208 are joined by a disulfide. Residue glycine 136 participates in ATP binding. Positions 158–160 are interaction with tRNA; the sequence is RDQ. The active-site Cysteine persulfide intermediate is cysteine 208.

The protein belongs to the MnmA/TRMU family.

Its subcellular location is the cytoplasm. The catalysed reaction is S-sulfanyl-L-cysteinyl-[protein] + uridine(34) in tRNA + AH2 + ATP = 2-thiouridine(34) in tRNA + L-cysteinyl-[protein] + A + AMP + diphosphate + H(+). Its function is as follows. Catalyzes the 2-thiolation of uridine at the wobble position (U34) of tRNA, leading to the formation of s(2)U34. This Rhodospirillum centenum (strain ATCC 51521 / SW) protein is tRNA-specific 2-thiouridylase MnmA.